We begin with the raw amino-acid sequence, 213 residues long: Pyrrolidone-carboxylate peptidase (213 aa).

Residues E81, C144, and H166 contribute to the active site.

Belongs to the peptidase C15 family. In terms of assembly, homotetramer.

The protein localises to the cytoplasm. It carries out the reaction Release of an N-terminal pyroglutamyl group from a polypeptide, the second amino acid generally not being Pro.. Removes 5-oxoproline from various penultimate amino acid residues except L-proline. The protein is Pyrrolidone-carboxylate peptidase of Pseudomonas fluorescens (strain SBW25).